A 741-amino-acid polypeptide reads, in one-letter code: T-box transcription factor TBX3 (741 aa).

Positions Leu-107 to Thr-220 form a DNA-binding region, T-box; first part. Residues Ile-241 to Asp-305 constitute a DNA-binding region (T-box; second part). Ser-369 is subject to Phosphoserine. The segment at Ser-369–Glu-469 is disordered. Basic and acidic residues-rich tracts occupy residues Ala-377–Glu-386 and Ser-420–His-437. Phosphoserine is present on residues Ser-432, Ser-438, Ser-456, Ser-705, Ser-736, Ser-738, and Ser-740. Polar residues predominate over residues Ser-438–Arg-447.

As to quaternary structure, interacts with PML. In terms of tissue distribution, in adults, highest levels in lung. Also found in brain, heart, kidney, liver and ovary.

The protein resides in the nucleus. Transcriptional repressor involved in developmental processes. Binds to the palindromic T site 5'-TTCACACCTAGGTGTGAA-3' DNA sequence, or a half-site, which are present in the regulatory region of several genes. Probably plays a role in limb pattern formation. Required for mammary placode induction, and maintenance of the mammary buds during development. Involved in branching morphogenesis in both developing lungs and adult mammary glands, via negative modulation of target genes; acting redundantly with TBX2. Required, together with TBX2, to maintain cell proliferation in the embryonic lung mesenchyme; perhaps acting downstream of SHH, BMP and TGFbeta signaling. Involved in modulating early inner ear development, acting independently of, and also redundantly with, TBX2 in different subregions of the developing ear. Acts as a negative regulator of PML function in cellular senescence. In Mus musculus (Mouse), this protein is T-box transcription factor TBX3 (Tbx3).